Here is a 532-residue protein sequence, read N- to C-terminus: Phosphoenolpyruvate carboxylase (532 aa).

It belongs to the PEPCase type 2 family. As to quaternary structure, homotetramer. Requires Mg(2+) as cofactor.

It carries out the reaction oxaloacetate + phosphate = phosphoenolpyruvate + hydrogencarbonate. Its function is as follows. Catalyzes the irreversible beta-carboxylation of phosphoenolpyruvate (PEP) to form oxaloacetate (OAA), a four-carbon dicarboxylic acid source for the tricarboxylic acid cycle. The protein is Phosphoenolpyruvate carboxylase of Methanopyrus kandleri (strain AV19 / DSM 6324 / JCM 9639 / NBRC 100938).